A 458-amino-acid polypeptide reads, in one-letter code: Elongation factor 1-alpha (458 aa).

The residue at position 2 (glycine 2) is a N,N,N-trimethylglycine. Lysine 3 bears the N6,N6-dimethyllysine; alternate mark. An N6-methyllysine; alternate modification is found at lysine 3. One can recognise a tr-type G domain in the interval 5 to 240 (KTHVNVVVIG…DAIEPPVRPT (236 aa)). The interval 14–21 (GHVDSGKS) is G1. 14 to 21 (GHVDSGKS) provides a ligand contact to GTP. Lysine 30 carries the post-translational modification N6-methyllysine. The G2 stretch occupies residues 70-74 (GITID). Lysine 79 is modified (N6,N6,N6-trimethyllysine). A G3 region spans residues 91–94 (DAPG). GTP-binding positions include 91–95 (DAPGH) and 153–156 (NKMD). The interval 153 to 156 (NKMD) is G4. The interval 192-194 (SGW) is G5. Residue lysine 316 is modified to N6,N6-dimethyllysine; alternate. The residue at position 316 (lysine 316) is an N6-methyllysine; alternate. Lysine 390 is modified (N6-methyllysine).

The protein belongs to the TRAFAC class translation factor GTPase superfamily. Classic translation factor GTPase family. EF-Tu/EF-1A subfamily.

Its subcellular location is the cytoplasm. Functionally, this protein promotes the GTP-dependent binding of aminoacyl-tRNA to the A-site of ribosomes during protein biosynthesis. The sequence is that of Elongation factor 1-alpha (TEF) from Eremothecium gossypii (strain ATCC 10895 / CBS 109.51 / FGSC 9923 / NRRL Y-1056) (Yeast).